Reading from the N-terminus, the 319-residue chain is Ninja-family protein AFP4 (319 aa).

Over residues 39 to 54 (DSEHGENQQEAKKRED) the composition is skewed to basic and acidic residues. Disordered regions lie at residues 39–63 (DSEHGENQQEAKKREDEAEEDEKDV), 99–120 (FVFDEQRSGGGNGGDMRRIVGR), and 205–228 (VTGPVNGKGKNGNTAKKQKNNVEN).

It belongs to the Ninja family. Interacts with ABI5/DPBF1, AREB3/DPBF3, EEL/DPBF4, ABF1 and ABF3/DPBF5. As to expression, predominantly expressed in roots and seedlings.

The protein resides in the nucleus. Acts as a negative regulator of abscisic acid (ABA) and salinity responses. This Arabidopsis thaliana (Mouse-ear cress) protein is Ninja-family protein AFP4 (AFP4).